Reading from the N-terminus, the 675-residue chain is PTS system glucose-specific EIICBA component (675 aa).

The PTS EIIC type-1 domain occupies 3-414 (KKLFGQMQRI…FNYKTPGRED (412 aa)). A run of 11 helical transmembrane segments spans residues 16-36 (LMLP…GTAF), 59-79 (MLTG…ALGV), 81-101 (IGLA…FIIL), 126-146 (VLGI…GALA), 170-190 (FVPI…AIIW), 211-231 (LAVF…LHHI), 273-293 (FMQG…LAIY), 303-323 (VVAG…ITEP), 328-348 (FLFV…LSFL), 355-375 (VHLG…GILP), and 378-398 (TAWW…YFVF). The 82-residue stretch at 425-506 (SQLPFDVLKA…AKIISGEITK (82 aa)) folds into the PTS EIIB type-1 domain. The active-site Phosphocysteine intermediate; for EIIB activity is Cys-447. The region spanning 547 to 651 (DKVFSEKMMG…SIITPVIITN (105 aa)) is the PTS EIIA type-1 domain. The active-site Tele-phosphohistidine intermediate; for EIIA activity is the His-599.

It localises to the cell membrane. It carries out the reaction N(pros)-phospho-L-histidyl-[protein] + D-glucose(out) = D-glucose 6-phosphate(in) + L-histidyl-[protein]. The phosphoenolpyruvate-dependent sugar phosphotransferase system (sugar PTS), a major carbohydrate active transport system, catalyzes the phosphorylation of incoming sugar substrates concomitantly with their translocation across the cell membrane. This system is involved in glucose transport. The sequence is that of PTS system glucose-specific EIICBA component (ptsG) from Staphylococcus epidermidis.